The sequence spans 472 residues: Alanine--anticapsin ligase (472 aa).

Residue E109 participates in Mg(2+) binding. Residues K138 and K178 each coordinate ATP. Residues 142–355 form the ATP-grasp domain; the sequence is RAAFNRAGVK…MAQLLLDVLC (214 aa). Residue L182 participates in Mg(2+) binding. ATP is bound by residues 184-185, 226-229, and Q268; these read SS and EEFL. Substrate contacts are provided by residues E273 and 309 to 311; that span reads HTE. Mg(2+)-binding residues include E311 and E324. 328 to 331 is a substrate binding site; it reads RFAG.

As to quaternary structure, monomer or homodimer. It depends on Mg(2+) as a cofactor.

The enzyme catalyses L-anticapsin + L-alanine + ATP = bacilysin + ADP + phosphate + H(+). The protein operates within antibiotic biosynthesis; bacilysin biosynthesis. In terms of biological role, part of the bacABCDEFG operon responsible for the biosynthesis of bacilysin, an irreversible inactivator of the glutaminase domain of glucosamine synthetase. Catalyzes the formation of alpha-dipeptides from various L-amino acids in the presence of ATP. In vivo catalyzes the ligation of L-alanine and L-anticapsin (epoxycyclohexanonyl-Ala) to produce the final bacilysin antibiotic (L-Ala-L-4S-cyclohexenonyl-Ala dipeptide). The protein is Alanine--anticapsin ligase of Bacillus subtilis.